Reading from the N-terminus, the 451-residue chain is Adenylyltransferase and sulfurtransferase MOCS3 (451 aa).

A disordered region spans residues glycine 42–leucine 62. The segment covering glutamate 43 to serine 52 has biased composition (acidic residues). Threonine 60 carries the phosphothreonine modification. ATP-binding positions include glycine 99, aspartate 120, serine 127–arginine 131, lysine 144, and aspartate 188–asparagine 189. 2 residues coordinate Zn(2+): cysteine 229 and cysteine 232. Residue cysteine 246 is the Glycyl thioester intermediate; for adenylyltransferase activity of the active site. Zn(2+) is bound by residues cysteine 304 and cysteine 307. Residues glutamine 353–proline 449 enclose the Rhodanese domain. Cysteine 408 serves as the catalytic Cysteine persulfide intermediate; for sulfurtransferase activity.

This sequence in the N-terminal section; belongs to the HesA/MoeB/ThiF family. UBA4 subfamily. Zn(2+) is required as a cofactor.

The protein resides in the cytoplasm. Its subcellular location is the cytosol. The catalysed reaction is [molybdopterin-synthase sulfur-carrier protein]-C-terminal Gly-Gly + ATP + H(+) = [molybdopterin-synthase sulfur-carrier protein]-C-terminal Gly-Gly-AMP + diphosphate. The enzyme catalyses [molybdopterin-synthase sulfur-carrier protein]-C-terminal Gly-Gly-AMP + S-sulfanyl-L-cysteinyl-[cysteine desulfurase] + AH2 = [molybdopterin-synthase sulfur-carrier protein]-C-terminal-Gly-aminoethanethioate + L-cysteinyl-[cysteine desulfurase] + A + AMP + 2 H(+). It participates in tRNA modification; 5-methoxycarbonylmethyl-2-thiouridine-tRNA biosynthesis. Its pathway is cofactor biosynthesis; molybdopterin biosynthesis. Plays a central role in 2-thiolation of mcm(5)S(2)U at tRNA wobble positions of cytosolic tRNA(Lys), tRNA(Glu) and tRNA(Gln). Also essential during biosynthesis of the molybdenum cofactor. Acts by mediating the C-terminal thiocarboxylation of sulfur carriers URM1 and MOCS2A. Its N-terminus first activates URM1 and MOCS2A as acyl-adenylates (-COAMP), then the persulfide sulfur on the catalytic cysteine is transferred to URM1 and MOCS2A to form thiocarboxylation (-COSH) of their C-terminus. The reaction probably involves hydrogen sulfide that is generated from the persulfide intermediate and that acts as a nucleophile towards URM1 and MOCS2A. Subsequently, a transient disulfide bond is formed. Does not use thiosulfate as sulfur donor; NFS1 probably acting as a sulfur donor for thiocarboxylation reactions. In Drosophila persimilis (Fruit fly), this protein is Adenylyltransferase and sulfurtransferase MOCS3.